The sequence spans 609 residues: MTIDNPSAFLKTLPTGSGVYQIQDAQGKVIYVGKARNLQKRVSSYFRRQLDSKTQAMMAQVQSIQTTITRNENEALLLEASFIKQFRPRYNVLLRDDKSYPYLYLATHQKFPRLDFYRGAKKAPGRYFGPYPNAGSVRENLALIQKLFKLRQCSESFFKNRTRPCLQYQIKRCTAPCVGYVNEQEYRRQVEDAILFFEGKNDQVIIKLTERMEVASENLVFEEAAHYRDQIRQLRRLQKQQIITGGKGNIDIIGIAESNGAIGFAILFIRSGRMIGHKPFFPNTPLGTTLQTALVEFIPQYYLSPLRNGDIPERIVTSEPLEDRLWIQRALSSGLNRRLAITDQKRAPYKQWQAMAALNAAQALSQHLAQKNTFALKLEAIQKSLALPNPIARIECFDISHTLGEATVASCVVFGEEGLIKKDYRRFNISGVTPGDDYGALRQALTRRYVRLKEGEGILPDVLLIDGGMGQLRQAAEVLEELQVSGVILTAIAKGPGRKAGLEKLFVWGRREEIHLPADNIAFHLIQQIRDEAHRFAITAHCNRRAKRRVESTLQEIEGIGPKRRQKLLKYFGGLQELQRASIEEIARVPGVSETLAKAIYDACHQHKG.

Residues 15-92 (TGSGVYQIQD…IKQFRPRYNV (78 aa)) enclose the GIY-YIG domain. In terms of domain architecture, UVR spans 202-237 (DQVIIKLTERMEVASENLVFEEAAHYRDQIRQLRRL).

It belongs to the UvrC family. In terms of assembly, interacts with UvrB in an incision complex.

The protein localises to the cytoplasm. In terms of biological role, the UvrABC repair system catalyzes the recognition and processing of DNA lesions. UvrC both incises the 5' and 3' sides of the lesion. The N-terminal half is responsible for the 3' incision and the C-terminal half is responsible for the 5' incision. This chain is UvrABC system protein C, found in Coxiella burnetii (strain Dugway 5J108-111).